Reading from the N-terminus, the 432-residue chain is Short/branched chain specific acyl-CoA dehydrogenase, mitochondrial (432 aa).

A mitochondrion-targeting transit peptide spans 1 to 33 (MAVSAFQLWRAGGLLRRNFLTHSSSWKIPPRVL). Position 70 is an N6-acetyllysine; alternate (lysine 70). Lysine 70 bears the N6-succinyllysine; alternate mark. FAD is bound by residues 174–183 (FCLSEAGAGS) and 207–209 (WIS). Serine 183 serves as a coordination point for substrate. Position 183 is a phosphoserine (serine 183). Residue tyrosine 229 participates in substrate binding. An N6-succinyllysine modification is found at lysine 278. Tyrosine 283 contributes to the substrate binding site. Lysine 284 carries the post-translational modification N6-acetyllysine; alternate. The residue at position 284 (lysine 284) is an N6-succinyllysine; alternate. 291 to 294 (NEGR) is a substrate binding site. FAD-binding positions include arginine 319, glutamine 330, and 387–391 (EWMGG). Residue glutamate 414 is the Proton acceptor of the active site. FAD is bound at residue 416–418 (TSN). At lysine 426 the chain carries N6-acetyllysine.

This sequence belongs to the acyl-CoA dehydrogenase family. In terms of assembly, homotetramer. Requires FAD as cofactor. Ubiquitously expressed.

It is found in the mitochondrion matrix. It catalyses the reaction 2-methylbutanoyl-CoA + oxidized [electron-transfer flavoprotein] + H(+) = (2E)-2-methylbut-2-enoyl-CoA + reduced [electron-transfer flavoprotein]. The catalysed reaction is (2S)-2-methylbutanoyl-CoA + oxidized [electron-transfer flavoprotein] + H(+) = (2E)-2-methylbut-2-enoyl-CoA + reduced [electron-transfer flavoprotein]. The enzyme catalyses (2R)-2-methylbutanoyl-CoA + oxidized [electron-transfer flavoprotein] + H(+) = ethylacryloyl-CoA + reduced [electron-transfer flavoprotein]. It carries out the reaction butanoyl-CoA + oxidized [electron-transfer flavoprotein] + H(+) = (2E)-butenoyl-CoA + reduced [electron-transfer flavoprotein]. It catalyses the reaction 2-methylpropanoyl-CoA + oxidized [electron-transfer flavoprotein] + H(+) = 2-methylpropenoyl-CoA + reduced [electron-transfer flavoprotein]. The catalysed reaction is hexanoyl-CoA + oxidized [electron-transfer flavoprotein] + H(+) = (2E)-hexenoyl-CoA + reduced [electron-transfer flavoprotein]. The enzyme catalyses valproyl-CoA + oxidized [electron-transfer flavoprotein] + H(+) = (2E)-2-propylpent-2-enoyl-CoA + reduced [electron-transfer flavoprotein]. The protein operates within lipid metabolism; mitochondrial fatty acid beta-oxidation. Its pathway is amino-acid degradation; L-isoleucine degradation. With respect to regulation, inhibited by N-ethylmaleimide, hydroxymercuribenzoate, methyl mercury iodide and heavy metals such as Hg2+, Cu2+, and Ag2+. Short and branched chain specific acyl-CoA dehydrogenase that catalyzes the removal of one hydrogen from C-2 and C-3 of the fatty acyl-CoA thioester, resulting in the formation of trans-2-enoyl-CoA. Among the different mitochondrial acyl-CoA dehydrogenases, acts specifically on short and branched chain acyl-CoA derivatives such as (S)-2-methylbutyryl-CoA as well as short straight chain acyl-CoAs such as butyryl-CoA. Plays an important role in the metabolism of L-isoleucine by catalyzing the dehydrogenation of 2-methylbutyryl-CoA, one of the steps of the L-isoleucine catabolic pathway. Can also act on valproyl-CoA, a metabolite of the valproic acid drug. The polypeptide is Short/branched chain specific acyl-CoA dehydrogenase, mitochondrial (Rattus norvegicus (Rat)).